Consider the following 441-residue polypeptide: Methionine gamma-lyase (441 aa).

The segment at 1–25 is disordered; it reads MAHFLETQEPLVFSGKKRNDRDDED. Lysine 248 carries the N6-(pyridoxal phosphate)lysine modification.

The protein belongs to the trans-sulfuration enzymes family. As to quaternary structure, homotetramer. It depends on pyridoxal 5'-phosphate as a cofactor. In terms of tissue distribution, expressed in roots, stems, siliques, leaves, flowers and seeds after imbibition (at protein level). Transcripts accumulate in dry mature seeds, but at protein level, only present upon imbibition.

The protein resides in the cytoplasm. The enzyme catalyses L-methionine + H2O = methanethiol + 2-oxobutanoate + NH4(+). Functionally, catalyzes the degradation of L-methionine to alpha-ketobutyrate, methanethiol and ammonia. Exhibits a high activity toward L-methionine, L-ethionine, L-homocysteine and seleno-L-methionine, but not L-cysteine. Involved in an alternative cysteine biosynthesis pathway to the reverse trans-sulfuration pathway (methionine-&gt;homocysteine-&gt;cystathionine-&gt;cysteine) in which methanethiol is an intermediate. Also mediates an alternative isoleucine biosynthesis pathway in which 2-ketobutyrate is an intermediate. The protein is Methionine gamma-lyase (MGL) of Arabidopsis thaliana (Mouse-ear cress).